The sequence spans 350 residues: Histidinol-phosphate aminotransferase 1 (350 aa).

Lys209 carries the N6-(pyridoxal phosphate)lysine modification.

Belongs to the class-II pyridoxal-phosphate-dependent aminotransferase family. Histidinol-phosphate aminotransferase subfamily. In terms of assembly, homodimer. Pyridoxal 5'-phosphate serves as cofactor.

The catalysed reaction is L-histidinol phosphate + 2-oxoglutarate = 3-(imidazol-4-yl)-2-oxopropyl phosphate + L-glutamate. It participates in amino-acid biosynthesis; L-histidine biosynthesis; L-histidine from 5-phospho-alpha-D-ribose 1-diphosphate: step 7/9. The sequence is that of Histidinol-phosphate aminotransferase 1 (hisC1) from Bradyrhizobium diazoefficiens (strain JCM 10833 / BCRC 13528 / IAM 13628 / NBRC 14792 / USDA 110).